Reading from the N-terminus, the 264-residue chain is Thymidylate synthase (264 aa).

A dUMP-binding site is contributed by R21. H51 contributes to the (6R)-5,10-methylene-5,6,7,8-tetrahydrofolate binding site. Residue 126–127 (RR) participates in dUMP binding. Residue C146 is the Nucleophile of the active site. DUMP contacts are provided by residues 166–169 (RSAD), N177, and 207–209 (HLY). D169 is a binding site for (6R)-5,10-methylene-5,6,7,8-tetrahydrofolate. A263 is a (6R)-5,10-methylene-5,6,7,8-tetrahydrofolate binding site.

Belongs to the thymidylate synthase family. Bacterial-type ThyA subfamily. In terms of assembly, homodimer.

Its subcellular location is the cytoplasm. It catalyses the reaction dUMP + (6R)-5,10-methylene-5,6,7,8-tetrahydrofolate = 7,8-dihydrofolate + dTMP. It participates in pyrimidine metabolism; dTTP biosynthesis. In terms of biological role, catalyzes the reductive methylation of 2'-deoxyuridine-5'-monophosphate (dUMP) to 2'-deoxythymidine-5'-monophosphate (dTMP) while utilizing 5,10-methylenetetrahydrofolate (mTHF) as the methyl donor and reductant in the reaction, yielding dihydrofolate (DHF) as a by-product. This enzymatic reaction provides an intracellular de novo source of dTMP, an essential precursor for DNA biosynthesis. The polypeptide is Thymidylate synthase (Legionella pneumophila (strain Paris)).